A 506-amino-acid chain; its full sequence is Trans-cinnamate 4-monooxygenase (506 aa).

The helical transmembrane segment at Leu-3 to Val-23 threads the bilayer. (E)-cinnamate contacts are provided by residues Arg-213–Gln-218 and Ala-306. Cys-447 provides a ligand contact to heme.

This sequence belongs to the cytochrome P450 family. It depends on heme as a cofactor.

It localises to the membrane. It carries out the reaction (E)-cinnamate + reduced [NADPH--hemoprotein reductase] + O2 = (E)-4-coumarate + oxidized [NADPH--hemoprotein reductase] + H2O + H(+). It functions in the pathway phenylpropanoid metabolism; trans-4-coumarate biosynthesis; trans-4-coumarate from trans-cinnamate: step 1/1. Functionally, catalyzes the first oxidative step of the phenylpropanoid pathway in higher plants by transforming trans-cinnamate into p-coumarate. The compounds formed by this pathway are essential components for lignification, pollination, and defense against ultraviolet light, predators and pathogens. The polypeptide is Trans-cinnamate 4-monooxygenase (CYP73A2) (Ruta graveolens (Common rue)).